The chain runs to 117 residues: Large ribosomal subunit protein uL18 (117 aa).

The protein belongs to the universal ribosomal protein uL18 family. As to quaternary structure, part of the 50S ribosomal subunit; part of the 5S rRNA/L5/L18/L25 subcomplex. Contacts the 5S and 23S rRNAs.

Functionally, this is one of the proteins that bind and probably mediate the attachment of the 5S RNA into the large ribosomal subunit, where it forms part of the central protuberance. This Francisella tularensis subsp. tularensis (strain FSC 198) protein is Large ribosomal subunit protein uL18.